A 778-amino-acid chain; its full sequence is Protein PHOTOPERIODIC CONTROL OF HYPOCOTYL 1 (778 aa).

3 disordered regions span residues 74 to 95 (QKRE…VGSS), 186 to 283 (HNRG…NSAT), and 316 to 335 (KTSP…KEAS). The segment covering 198 to 212 (SSKDTQEDGPRKNES) has biased composition (basic and acidic residues). Residues 230 to 247 (SGSISSSSTKGKGIKGYS) show a composition bias toward low complexity. Residues 265 to 275 (PDRENSVDGHQ) show a composition bias toward basic and acidic residues. The segment covering 317–326 (TSPSDSSETK) has biased composition (polar residues). The F-box domain maps to 470-505 (WPLLPNDLLELIMGHLETSFEIFLFRSVCSSWRSVV).

Interacts with light-activated phyB. Binds directly to PIF1 and COP1. Ubiquitinated by COP1 in darkness; this leads to proteasomal degradation. Mainly expressed in cotyledons, hypocotyls, leaves and roots.

Its subcellular location is the nucleus. Functionally, together with PCHL, regulates growth and development adaptation to the ambient environment by controlling negatively phytochrome B (phyB) dark reversion, a temperature-dependent thermal relaxation process during which phyB reverts from the active to the inactive state. Contributes to red (R) light-triggered photomorphogenesis. Promotes various light responses such as seed germination, hypocotyl gravitropism and chlorophyll biosynthesis, via direct interaction with PIF1 and COP1. Prevents DNA-binding ability of PIF1 to negatively regulate the expressions of its target genes. Facilitates the physical interaction between phyB and PIF1 and the subsequent light-induced degradation of PIF1. This Arabidopsis thaliana (Mouse-ear cress) protein is Protein PHOTOPERIODIC CONTROL OF HYPOCOTYL 1.